Consider the following 375-residue polypeptide: MQKLQIYVYIYLFMLIVAGPVDLNENSEQKENVEKEGLCNACMWRQNTKSSRLEAIKIQILSKLRLETAPNISKDAIRQLLPKAPPLRELIDQYDVQRDDSSDGSLEDDDYHATTETIITMPTESDLLMQVEGKPKCCFFKFSSKIQYNKVVKAQLWIYLRPVKTPTTVFVQILRLIKPMKDGTRYTGIRSLKLDMNPGTGIWQSIDVKTVLQNWLKQPESNLGIEIKALDENGHDLAVTFPGPGEDGLNPFLEVKVTDTPKRSRRDFGLDCDEHSTESRCCRYPLTVDFEAFGWDWIIAPKRYKANYCSGECEFVFLQKYPHTHLVHQANPRGSAGPCCTPTKMSPINMLYFNGKEQIIYGKIPAMVVDRCGCS.

The signal sequence occupies residues 1–23 (MQKLQIYVYIYLFMLIVAGPVDL). A propeptide spanning residues 24-266 (NENSEQKENV…VTDTPKRSRR (243 aa)) is cleaved from the precursor. N-linked (GlcNAc...) asparagine glycosylation is present at Asn-71. 4 disulfide bridges follow: Cys-272-Cys-282, Cys-281-Cys-340, Cys-309-Cys-372, and Cys-313-Cys-374.

This sequence belongs to the TGF-beta family. In terms of assembly, homodimer; disulfide-linked. Interacts with WFIKKN2, leading to inhibit its activity. Interacts with FSTL3. Synthesized as large precursor molecule that undergoes proteolytic cleavage to generate an N-terminal propeptide and a disulfide linked C-terminal dimer, which is the biologically active molecule. The circulating form consists of a latent complex of the C-terminal dimer and other proteins, including its propeptide, which maintain the C-terminal dimer in a latent, inactive state. Ligand activation requires additional cleavage of the prodomain by a tolloid-like metalloproteinase.

The protein localises to the secreted. In terms of biological role, acts specifically as a negative regulator of skeletal muscle growth. The protein is Growth/differentiation factor 8 (MSTN) of Sus scrofa (Pig).